Reading from the N-terminus, the 349-residue chain is Microbial Terpene synthase-like protein 1 (349 aa).

D98, D102, N243, and S247 together coordinate Mg(2+). A DDXXD motif motif is present at residues 98–102 (DDILD).

It belongs to the terpene synthase family. Mg(2+) is required as a cofactor.

The protein operates within secondary metabolite biosynthesis; terpenoid biosynthesis. In terms of biological role, sesquiterpene synthase converting farnesyl diphosphate to six sesquiterpenes, with beta-elemene, delta-cadinene and an unidentified oxygenated sesquiterpene as the major products. Has no diterpene synthase activity. This is Microbial Terpene synthase-like protein 1 from Selaginella moellendorffii (Spikemoss).